A 355-amino-acid chain; its full sequence is NADH-quinone oxidoreductase subunit H (355 aa).

The next 8 helical transmembrane spans lie at 25–45, 91–111, 126–146, 170–190, 205–225, 252–272, 290–310, and 330–350; these read IVRILVVSVVILLCVAYLILW, WLYLIAPVMTVVPAFAVWAVI, LLYAMAISSIGVYAVILAGWA, MGFALVLVLMTAGSLNLSEIV, FLSWNWLPLLPAFVVYFISGI, GMAFALFFLAEYINMIVISAL, FIPGIFWLVLKIFALLSVFIW, and VFLPVTVVWVVVVGFWMMSPL.

Belongs to the complex I subunit 1 family. NDH-1 is composed of 14 different subunits. Subunits NuoA, H, J, K, L, M, N constitute the membrane sector of the complex.

The protein localises to the cell inner membrane. It carries out the reaction a quinone + NADH + 5 H(+)(in) = a quinol + NAD(+) + 4 H(+)(out). Its function is as follows. NDH-1 shuttles electrons from NADH, via FMN and iron-sulfur (Fe-S) centers, to quinones in the respiratory chain. The immediate electron acceptor for the enzyme in this species is believed to be ubiquinone. Couples the redox reaction to proton translocation (for every two electrons transferred, four hydrogen ions are translocated across the cytoplasmic membrane), and thus conserves the redox energy in a proton gradient. This subunit may bind ubiquinone. The protein is NADH-quinone oxidoreductase subunit H of Burkholderia lata (strain ATCC 17760 / DSM 23089 / LMG 22485 / NCIMB 9086 / R18194 / 383).